Here is a 995-residue protein sequence, read N- to C-terminus: Zinc finger protein ZFPM1 (995 aa).

Basic residues predominate over residues 1-14 (MSRRKQSNPRQIKR). A disordered region spans residues 1-103 (MSRRKQSNPR…EAAMASPWSG (103 aa)). Over residues 15–36 (SLRDMEAGEEAKAMDSSPKEQE) the composition is skewed to basic and acidic residues. 2 stretches are compositionally biased toward acidic residues: residues 67 to 78 (SPEDPEDMEGQE) and 86 to 95 (EEKEEKEEEA). Phosphoserine is present on residues Ser-99 and Ser-143. The segment at 249-282 (VINKDVFPCKDCGIWYRSERNLQAHLLYYCASRQ) adopts a CCHC FOG-type 1 zinc-finger fold. Cys-257, Cys-260, His-273, and Cys-278 together coordinate Zn(2+). Ser-286 carries the post-translational modification Phosphoserine. 3 consecutive C2H2-type zinc fingers follow at residues 303-327 (RVCPFPQCRKSCPSASSLEIHMRSH), 333-355 (FVCLICLSAFTTKANCERHLKVH), and 361-384 (GVCHNCGFISTTRDILYSHLVTNH). The tract at residues 343–354 (TTKANCERHLKV) is interaction with TACC3. A phosphoserine mark is found at Ser-397, Ser-497, and Ser-500. The segment at 424 to 526 (PLVPADKAPT…SSPGPGELTM (103 aa)) is disordered. Positions 509-525 (ELSSPTPGSSPGPGELT) are enriched in low complexity. Residues 584-617 (FSGTKGATCFECEITFNNINNFYVHKRLYCSGRR) form a CCHC FOG-type 2 zinc finger. Positions 592, 595, 608, and 613 each coordinate Zn(2+). The tract at residues 616–694 (RRAPEDPPTV…SVDDAEDDPS (79 aa)) is disordered. Residues 630-652 (AATGPARAPAGAAAEPDPSRSSP) are compositionally biased toward low complexity. 2 positions are modified to phosphoserine: Ser-651 and Ser-684. The segment at 690–723 (EDDPSRTLCEACNIRFSRHETYTVHKRYYCASRH) adopts a CCHC FOG-type 3 zinc-finger fold. Residues Cys-698, Cys-701, His-714, and Cys-719 each coordinate Zn(2+). The disordered stretch occupies residues 721–827 (SRHDPPPRRP…PRRQSPDAPT (107 aa)). Pro residues-rich tracts occupy residues 728-740 (RRPPAPTTAPGPA) and 764-779 (GAPPPAAGPAPVPVVP). The segment covering 785 to 800 (LPSSPRPGSASAGPAP) has biased composition (low complexity). Position 803 is a phosphoserine (Ser-803). The interaction with CTBP2 stretch occupies residues 811–817 (PIDLSKR). Position 822 is a phosphoserine (Ser-822). A CCHC FOG-type 4 zinc finger spans residues 830-863 (PALADYHECTACRVSFHSLEAYLAHKKYSCPAAP). Residues Cys-838, Cys-841, His-854, and Cys-859 each contribute to the Zn(2+) site. The C2H2-type 4 zinc finger occupies 868 to 891 (ALCPYCPPNGRVRGDLVEHLRQAH). Residues 892-960 (GLQVAKPAAS…APAPAPGGGG (69 aa)) form a disordered region. A compositionally biased stretch (basic and acidic residues) spans 908 to 922 (TPAERAPRDSPDGRA). Ser-925 and Ser-927 each carry phosphoserine. Residues 957–990 (GGGGGHRYCRLCNIRFSSLSTFIAHKKYYCSSHA) form a CCHC FOG-type 5 zinc finger. 4 residues coordinate Zn(2+): Cys-965, Cys-968, His-981, and Cys-986.

Belongs to the FOG (Friend of GATA) family. In terms of assembly, interacts with the N-terminal zinc-finger of GATA1, GATA2 and GATA3. Interacts with corepressor CTBP2; this interaction is however not essential for corepressor activity in erythropoiesis. Interacts with TACC3. In terms of tissue distribution, mainly expressed in hematopoietic tissues. Expressed in the spleen, a primary site of hematopoiesis in the adult mouse, as well as in the liver and testis, but not in the heart, brain, lung, kidney, or skeletal muscle. Among hematopoietic cell lines, it is strongly expressed in erythroid and megakaryocytic cell lines. Expressed at low level in several lymphoid and early myeloid cell lines. Not expressed in mast cell and macrophage lines. Expressed in the heart, where it colocalizes with GATA4, GATA5 and GATA6.

It localises to the nucleus. Its function is as follows. Transcription regulator that plays an essential role in erythroid and megakaryocytic cell differentiation. Essential cofactor that acts via the formation of a heterodimer with transcription factors of the GATA family GATA1, GATA2 and GATA3. Such heterodimer can both activate or repress transcriptional activity, depending on the cell and promoter context. The heterodimer formed with GATA proteins is essential to activate expression of genes such as NFE2, ITGA2B, alpha- and beta-globin, while it represses expression of KLF1. May be involved in regulation of some genes in gonads. May also be involved in cardiac development, in a non-redundant way with ZFPM2/FOG2. The protein is Zinc finger protein ZFPM1 (Zfpm1) of Mus musculus (Mouse).